The primary structure comprises 202 residues: MKSLQIICLLFIFVARGSCRSCEICHNVGNDCGYDYVEECHSPEDQCGKVFLEISSAPLSIRSIHRNCFSSSLCKLEHFDVNTGQETYLRGRIHCCDEEKCEGRPFPGLPLSHPNGYVCPGVLGLFSEDSSESEAACKGDETKCINIVGYRKERFPGDIAYNIKGCVSSCPELRLSNRTHEERRNDLIKVECRDAVKITPSE.

The N-terminal stretch at 1–19 (MKSLQIICLLFIFVARGSC) is a signal peptide. 8 disulfide bridges follow: C22/C47, C25/C32, C40/C68, C74/C95, C96/C101, C119/C144, C137/C166, and C170/C192.

Belongs to the CNF-like-inhibitor family. Heteromer composed of subunit A and subunit B. Expressed by the liver.

It is found in the secreted. Inhibits the enzymatic activity of the phospholipase A2 (PLA2). The chain is Phospholipase A2 inhibitor gamma subunit A from Elaphe climacophora (Japanese rat snake).